The following is a 478-amino-acid chain: Kynureninase (478 aa).

Pyridoxal 5'-phosphate-binding positions include leucine 138, threonine 139, 166–169, aspartate 252, histidine 255, and tyrosine 277; that span reads FPSD. Lysine 278 is modified (N6-(pyridoxal phosphate)lysine). Pyridoxal 5'-phosphate contacts are provided by tryptophan 315 and asparagine 343.

Belongs to the kynureninase family. Homodimer. Pyridoxal 5'-phosphate serves as cofactor.

The protein localises to the cytoplasm. It carries out the reaction L-kynurenine + H2O = anthranilate + L-alanine + H(+). It catalyses the reaction 3-hydroxy-L-kynurenine + H2O = 3-hydroxyanthranilate + L-alanine + H(+). It participates in amino-acid degradation; L-kynurenine degradation; L-alanine and anthranilate from L-kynurenine: step 1/1. The protein operates within cofactor biosynthesis; NAD(+) biosynthesis; quinolinate from L-kynurenine: step 2/3. Functionally, catalyzes the cleavage of L-kynurenine (L-Kyn) and L-3-hydroxykynurenine (L-3OHKyn) into anthranilic acid (AA) and 3-hydroxyanthranilic acid (3-OHAA), respectively. In Coccidioides immitis (strain RS) (Valley fever fungus), this protein is Kynureninase.